A 392-amino-acid polypeptide reads, in one-letter code: 4-hydroxybenzoate polyprenyltransferase, mitochondrial (392 aa).

Residues 1-22 (MYALRHLRLQSARHFRSSYAAA) constitute a mitochondrion transit peptide. 9 helical membrane passes run 90-110 (IGTY…ADAG), 115-135 (LTML…GCTI), 163-183 (FDAI…LVQL), 184-204 (NWQS…YPLM), 207-227 (VTYW…LLGW), 236-256 (LAAC…YDTI), 283-303 (VWLS…GWAC), 307-327 (VPYY…IYSL), and 339-359 (FISN…GTLL). The segment at 365 to 392 (KKQRQSSLTTSTASSYVPALPQKPEVLS) is disordered. The span at 369-379 (QSSLTTSTASS) shows a compositional bias: polar residues.

Belongs to the UbiA prenyltransferase family. Mg(2+) serves as cofactor.

The protein resides in the mitochondrion inner membrane. It carries out the reaction an all-trans-polyprenyl diphosphate + 4-hydroxybenzoate = a 4-hydroxy-3-(all-trans-polyprenyl)benzoate + diphosphate. The protein operates within cofactor biosynthesis; ubiquinone biosynthesis. Functionally, catalyzes the prenylation of para-hydroxybenzoate (PHB) with an all-trans polyprenyl group. Mediates the second step in the final reaction sequence of coenzyme Q (CoQ) biosynthesis, which is the condensation of the polyisoprenoid side chain with PHB, generating the first membrane-bound Q intermediate. The protein is 4-hydroxybenzoate polyprenyltransferase, mitochondrial of Drosophila melanogaster (Fruit fly).